Consider the following 392-residue polypeptide: Acetyl-CoA acetyltransferase (392 aa).

The active-site Acyl-thioester intermediate is the Cys85. CoA contacts are provided by Cys206, Ser207, Val209, and Lys332. His336 acts as the Proton acceptor in catalysis.

This sequence belongs to the thiolase-like superfamily. Thiolase family. As to quaternary structure, interacts with HMG-CoA synthase (HMGCS) that catalyzes the second step in the pathway and with a DUF35 protein. The acetoacetyl-CoA thiolase/HMG-CoA synthase complex channels the intermediate via a fused CoA-binding site, which allows for efficient coupling of the endergonic thiolase reaction with the exergonic HMGCS reaction.

The catalysed reaction is 2 acetyl-CoA = acetoacetyl-CoA + CoA. It participates in metabolic intermediate biosynthesis; (R)-mevalonate biosynthesis; (R)-mevalonate from acetyl-CoA: step 1/3. In terms of biological role, catalyzes the condensation of two acetyl-coA molecules into acetoacetyl-CoA. Functions in the mevalonate (MVA) pathway leading to isopentenyl diphosphate (IPP), a key precursor for the biosynthesis of isoprenoid compounds that are building blocks of archaeal membrane lipids. The protein is Acetyl-CoA acetyltransferase of Methanothermococcus thermolithotrophicus (Methanococcus thermolithotrophicus).